A 179-amino-acid chain; its full sequence is ATP-dependent protease subunit HslV (179 aa).

Residue Thr6 is part of the active site. The Na(+) site is built by Ser162, Cys165, and Thr168.

Belongs to the peptidase T1B family. HslV subfamily. As to quaternary structure, a double ring-shaped homohexamer of HslV is capped on each side by a ring-shaped HslU homohexamer. The assembly of the HslU/HslV complex is dependent on binding of ATP.

It is found in the cytoplasm. The catalysed reaction is ATP-dependent cleavage of peptide bonds with broad specificity.. With respect to regulation, allosterically activated by HslU binding. In terms of biological role, protease subunit of a proteasome-like degradation complex believed to be a general protein degrading machinery. This Maridesulfovibrio salexigens (strain ATCC 14822 / DSM 2638 / NCIMB 8403 / VKM B-1763) (Desulfovibrio salexigens) protein is ATP-dependent protease subunit HslV.